We begin with the raw amino-acid sequence, 157 residues long: 2-C-methyl-D-erythritol 2,4-cyclodiphosphate synthase (157 aa).

D8 and H10 together coordinate a divalent metal cation. Residues 8–10 (DVH) and 34–35 (HS) contribute to the 4-CDP-2-C-methyl-D-erythritol 2-phosphate site. H42 serves as a coordination point for a divalent metal cation. 4-CDP-2-C-methyl-D-erythritol 2-phosphate contacts are provided by residues 56–58 (DIG), 61–65 (FPDTD), 100–106 (AQAPKMA), 132–135 (TTTE), F139, and R142.

Belongs to the IspF family. Homotrimer. It depends on a divalent metal cation as a cofactor.

The catalysed reaction is 4-CDP-2-C-methyl-D-erythritol 2-phosphate = 2-C-methyl-D-erythritol 2,4-cyclic diphosphate + CMP. Its pathway is isoprenoid biosynthesis; isopentenyl diphosphate biosynthesis via DXP pathway; isopentenyl diphosphate from 1-deoxy-D-xylulose 5-phosphate: step 4/6. Involved in the biosynthesis of isopentenyl diphosphate (IPP) and dimethylallyl diphosphate (DMAPP), two major building blocks of isoprenoid compounds. Catalyzes the conversion of 4-diphosphocytidyl-2-C-methyl-D-erythritol 2-phosphate (CDP-ME2P) to 2-C-methyl-D-erythritol 2,4-cyclodiphosphate (ME-CPP) with a corresponding release of cytidine 5-monophosphate (CMP). This chain is 2-C-methyl-D-erythritol 2,4-cyclodiphosphate synthase, found in Ectopseudomonas mendocina (strain ymp) (Pseudomonas mendocina).